Reading from the N-terminus, the 180-residue chain is ATP-dependent protease subunit HslV (180 aa).

The active site involves T7. A165, C168, and T171 together coordinate Na(+).

The protein belongs to the peptidase T1B family. HslV subfamily. As to quaternary structure, a double ring-shaped homohexamer of HslV is capped on each side by a ring-shaped HslU homohexamer. The assembly of the HslU/HslV complex is dependent on binding of ATP.

It is found in the cytoplasm. The enzyme catalyses ATP-dependent cleavage of peptide bonds with broad specificity.. With respect to regulation, allosterically activated by HslU binding. Functionally, protease subunit of a proteasome-like degradation complex believed to be a general protein degrading machinery. This is ATP-dependent protease subunit HslV from Geobacillus kaustophilus (strain HTA426).